An 87-amino-acid polypeptide reads, in one-letter code: UPF0367 protein P9211_01391 (87 aa).

This sequence belongs to the UPF0367 family.

The polypeptide is UPF0367 protein P9211_01391 (Prochlorococcus marinus (strain MIT 9211)).